Here is a 546-residue protein sequence, read N- to C-terminus: Phosphomethylpyrimidine synthase (546 aa).

Substrate contacts are provided by residues Asn-145, Met-174, Tyr-203, His-239, 259–261 (SRG), 300–303 (DGLR), and Glu-339. His-343 is a binding site for Zn(2+). Tyr-366 is a substrate binding site. His-407 contributes to the Zn(2+) binding site. Residues Cys-487, Cys-490, and Cys-495 each contribute to the [4Fe-4S] cluster site.

This sequence belongs to the ThiC family. [4Fe-4S] cluster is required as a cofactor.

It carries out the reaction 5-amino-1-(5-phospho-beta-D-ribosyl)imidazole + S-adenosyl-L-methionine = 4-amino-2-methyl-5-(phosphooxymethyl)pyrimidine + CO + 5'-deoxyadenosine + formate + L-methionine + 3 H(+). It participates in cofactor biosynthesis; thiamine diphosphate biosynthesis. Functionally, catalyzes the synthesis of the hydroxymethylpyrimidine phosphate (HMP-P) moiety of thiamine from aminoimidazole ribotide (AIR) in a radical S-adenosyl-L-methionine (SAM)-dependent reaction. The protein is Phosphomethylpyrimidine synthase of Mycobacterium ulcerans (strain Agy99).